We begin with the raw amino-acid sequence, 217 residues long: N-(5'-phosphoribosyl)anthranilate isomerase (217 aa).

The protein belongs to the TrpF family.

The catalysed reaction is N-(5-phospho-beta-D-ribosyl)anthranilate = 1-(2-carboxyphenylamino)-1-deoxy-D-ribulose 5-phosphate. It functions in the pathway amino-acid biosynthesis; L-tryptophan biosynthesis; L-tryptophan from chorismate: step 3/5. The protein is N-(5'-phosphoribosyl)anthranilate isomerase of Synechococcus sp. (strain ATCC 27144 / PCC 6301 / SAUG 1402/1) (Anacystis nidulans).